The primary structure comprises 252 residues: Aquaporin TIP1-2 (252 aa).

Residues methionine 1 to serine 23 are Cytoplasmic-facing. A helical transmembrane segment spans residues leucine 24 to phenylalanine 44. Residues asparagine 45–proline 55 are Vacuolar-facing. The helical transmembrane segment at alanine 56 to glycine 76 threads the bilayer. The Cytoplasmic segment spans residues alanine 77 to glycine 103. The short motif at asparagine 85 to alanine 87 is the NPA 1 element. A helical transmembrane segment spans residues isoleucine 104–alanine 124. Residues threonine 125–asparagine 143 lie on the Vacuolar side of the membrane. Residues alanine 144 to valine 164 form a helical membrane-spanning segment. Over aspartate 165–glycine 172 the chain is Cytoplasmic. A helical transmembrane segment spans residues valine 173 to phenylalanine 193. Residues aspartate 194–tyrosine 219 lie on the Vacuolar side of the membrane. The NPA 2 signature appears at asparagine 199–alanine 201. Residues tryptophan 220–glycine 240 traverse the membrane as a helical segment. Residues glutamine 241–tyrosine 252 are Cytoplasmic-facing.

It belongs to the MIP/aquaporin (TC 1.A.8) family. TIP (TC 1.A.8.10) subfamily. Mainly expressed in fruits and leaves, and, to a lower extent, in roots, stems and flowers.

It is found in the vacuole membrane. Its function is as follows. Water channel required to facilitate the transport of water from the vacuolar compartment to the cytoplasm. In Musa acuminata (Banana), this protein is Aquaporin TIP1-2.